The following is a 606-amino-acid chain: Ribonucleoprotein PTB-binding 1 (606 aa).

The tract at residues 1-41 is disordered; the sequence is MAADVSVTHRPPLSPKSGAEVEAGDAAERRAPEEELPPLDP. Residue alanine 2 is modified to N-acetylalanine. Phosphoserine is present on residues serine 6 and serine 14. Residues 45-60 carry the Nuclear localization signal motif; that stretch reads RKRLEHTERQFRNRRK. RRM domains lie at 59-130, 132-210, and 221-299; these read RKIL…LQPT, ALLC…WTDA, and RCLC…FCAP. The interaction with PTBP1 stretch occupies residues 307–395; the sequence is LAALIAAQAT…QTQGQKKPGI (89 aa). Residues 391–474 form a disordered region; it reads KKPGILGDSP…PPAPVGLRGS (84 aa). Residues 453–462 show a composition bias toward low complexity; sequence LGLGPPAAQL. A Phosphothreonine modification is found at threonine 463. Serine 474 carries the phosphoserine modification. Proline 488 bears the Phosphothreonine mark. Residues 519–564 form a disordered region; that stretch reads GLLGLSPGPNGHSHLLKVRAGGGDMQGWEAPAPQRPLTRPALPSVS. Serine 562 and histidine 567 each carry phosphoserine. Positions 579–606 are disordered; that stretch reads CPRPSPAQKAAMWASTPRASAATTRTPT. A compositionally biased stretch (low complexity) spans 592-606; the sequence is ASTPRASAATTRTPT.

As to quaternary structure, interacts with PTBP1, RAVER2, VCL and ACTN1. Part of a complex containing RAVER1, VCL and ACTN1.

The protein localises to the nucleus. It localises to the cytoplasm. In terms of biological role, cooperates with PTBP1 to modulate regulated alternative splicing events. Promotes exon skipping. Cooperates with PTBP1 to modulate switching between mutually exclusive exons during maturation of the TPM1 pre-mRNA. The chain is Ribonucleoprotein PTB-binding 1 (RAVER1) from Homo sapiens (Human).